The following is a 254-amino-acid chain: Leucyl/phenylalanyl-tRNA--protein transferase (254 aa).

The protein belongs to the L/F-transferase family.

The protein resides in the cytoplasm. The enzyme catalyses N-terminal L-lysyl-[protein] + L-leucyl-tRNA(Leu) = N-terminal L-leucyl-L-lysyl-[protein] + tRNA(Leu) + H(+). It carries out the reaction N-terminal L-arginyl-[protein] + L-leucyl-tRNA(Leu) = N-terminal L-leucyl-L-arginyl-[protein] + tRNA(Leu) + H(+). It catalyses the reaction L-phenylalanyl-tRNA(Phe) + an N-terminal L-alpha-aminoacyl-[protein] = an N-terminal L-phenylalanyl-L-alpha-aminoacyl-[protein] + tRNA(Phe). Its function is as follows. Functions in the N-end rule pathway of protein degradation where it conjugates Leu, Phe and, less efficiently, Met from aminoacyl-tRNAs to the N-termini of proteins containing an N-terminal arginine or lysine. This Burkholderia cenocepacia (strain ATCC BAA-245 / DSM 16553 / LMG 16656 / NCTC 13227 / J2315 / CF5610) (Burkholderia cepacia (strain J2315)) protein is Leucyl/phenylalanyl-tRNA--protein transferase.